The chain runs to 188 residues: GTP cyclohydrolase 1 (188 aa).

Zn(2+) contacts are provided by cysteine 76, histidine 79, and cysteine 148.

This sequence belongs to the GTP cyclohydrolase I family. In terms of assembly, toroid-shaped homodecamer, composed of two pentamers of five dimers.

The catalysed reaction is GTP + H2O = 7,8-dihydroneopterin 3'-triphosphate + formate + H(+). It participates in cofactor biosynthesis; 7,8-dihydroneopterin triphosphate biosynthesis; 7,8-dihydroneopterin triphosphate from GTP: step 1/1. The chain is GTP cyclohydrolase 1 from Caldanaerobacter subterraneus subsp. tengcongensis (strain DSM 15242 / JCM 11007 / NBRC 100824 / MB4) (Thermoanaerobacter tengcongensis).